A 142-amino-acid polypeptide reads, in one-letter code: MAEVSEEIRNLAARHQEFQRQAEALRQEMSMVQASIASCDQAIATINELKAASEAGRAAETMVPVGFGSYVYAEVKNPDKVVVNLGAGFSAEETAEAAVETLNRRKEQLTKILEQMNASLTKIAQGMQALETEAAKIQPGQA.

The protein belongs to the prefoldin subunit alpha family. As to quaternary structure, heterohexamer of two alpha and four beta subunits.

It localises to the cytoplasm. Functionally, molecular chaperone capable of stabilizing a range of proteins. Seems to fulfill an ATP-independent, HSP70-like function in archaeal de novo protein folding. The polypeptide is Prefoldin subunit alpha (Methanosarcina mazei (strain ATCC BAA-159 / DSM 3647 / Goe1 / Go1 / JCM 11833 / OCM 88) (Methanosarcina frisia)).